The chain runs to 1058 residues: Carbamoyl phosphate synthase large chain (1058 aa).

The carboxyphosphate synthetic domain stretch occupies residues 1–401; that stretch reads MPKRKDIQKI…SLLKACRSLE (401 aa). Residues arginine 129, arginine 169, glycine 175, glycine 176, arginine 208, isoleucine 210, glutamate 215, glycine 241, isoleucine 242, histidine 243, glutamine 284, and glutamate 298 each coordinate ATP. One can recognise an ATP-grasp 1 domain in the interval 133-327; it reads KQLMQELDQP…IAKLAAKIAV (195 aa). Mg(2+) is bound by residues glutamine 284, glutamate 298, and asparagine 300. Mn(2+)-binding residues include glutamine 284, glutamate 298, and asparagine 300. The tract at residues 402-546 is oligomerization domain; the sequence is IGVCHNEMTS…YSTYELENES (145 aa). The tract at residues 547-929 is carbamoyl phosphate synthetic domain; that stretch reads VQSNKESILV…ALYKAFEANN (383 aa). In terms of domain architecture, ATP-grasp 2 spans 671-861; that stretch reads EKALKELGIP…MAQIATKLIL (191 aa). The ATP site is built by arginine 707, serine 746, isoleucine 748, glutamate 752, glycine 777, valine 778, histidine 779, serine 780, glutamine 820, and glutamate 832. Mg(2+) is bound by residues glutamine 820, glutamate 832, and asparagine 834. Mn(2+)-binding residues include glutamine 820, glutamate 832, and asparagine 834. The MGS-like domain maps to 930–1058; sequence SHLSEFGQIV…ESRCFNIEAI (129 aa). Residues 930–1058 form an allosteric domain region; the sequence is SHLSEFGQIV…ESRCFNIEAI (129 aa).

This sequence belongs to the CarB family. As to quaternary structure, composed of two chains; the small (or glutamine) chain promotes the hydrolysis of glutamine to ammonia, which is used by the large (or ammonia) chain to synthesize carbamoyl phosphate. Tetramer of heterodimers (alpha,beta)4. Requires Mg(2+) as cofactor. Mn(2+) is required as a cofactor.

It catalyses the reaction hydrogencarbonate + L-glutamine + 2 ATP + H2O = carbamoyl phosphate + L-glutamate + 2 ADP + phosphate + 2 H(+). The catalysed reaction is hydrogencarbonate + NH4(+) + 2 ATP = carbamoyl phosphate + 2 ADP + phosphate + 2 H(+). Its pathway is amino-acid biosynthesis; L-arginine biosynthesis; carbamoyl phosphate from bicarbonate: step 1/1. It functions in the pathway pyrimidine metabolism; UMP biosynthesis via de novo pathway; (S)-dihydroorotate from bicarbonate: step 1/3. Large subunit of the glutamine-dependent carbamoyl phosphate synthetase (CPSase). CPSase catalyzes the formation of carbamoyl phosphate from the ammonia moiety of glutamine, carbonate, and phosphate donated by ATP, constituting the first step of 2 biosynthetic pathways, one leading to arginine and/or urea and the other to pyrimidine nucleotides. The large subunit (synthetase) binds the substrates ammonia (free or transferred from glutamine from the small subunit), hydrogencarbonate and ATP and carries out an ATP-coupled ligase reaction, activating hydrogencarbonate by forming carboxy phosphate which reacts with ammonia to form carbamoyl phosphate. This Streptococcus pyogenes serotype M3 (strain ATCC BAA-595 / MGAS315) protein is Carbamoyl phosphate synthase large chain.